A 292-amino-acid polypeptide reads, in one-letter code: 4-hydroxy-tetrahydrodipicolinate synthase (292 aa).

Threonine 45 provides a ligand contact to pyruvate. Residue tyrosine 133 is the Proton donor/acceptor of the active site. Residue lysine 161 is the Schiff-base intermediate with substrate of the active site. Isoleucine 203 provides a ligand contact to pyruvate.

This sequence belongs to the DapA family. As to quaternary structure, homotetramer; dimer of dimers.

It is found in the cytoplasm. The catalysed reaction is L-aspartate 4-semialdehyde + pyruvate = (2S,4S)-4-hydroxy-2,3,4,5-tetrahydrodipicolinate + H2O + H(+). It participates in amino-acid biosynthesis; L-lysine biosynthesis via DAP pathway; (S)-tetrahydrodipicolinate from L-aspartate: step 3/4. Functionally, catalyzes the condensation of (S)-aspartate-beta-semialdehyde [(S)-ASA] and pyruvate to 4-hydroxy-tetrahydrodipicolinate (HTPA). The polypeptide is 4-hydroxy-tetrahydrodipicolinate synthase (Vibrio vulnificus (strain CMCP6)).